The chain runs to 96 residues: Large ribosomal subunit protein eL21 (96 aa).

The segment at 1–37 (MPSSNGPMTGTRDKLSNSPRERGMSPPQRAIQEYDEG) is disordered. The segment covering 11–23 (TRDKLSNSPRERG) has biased composition (basic and acidic residues).

Belongs to the eukaryotic ribosomal protein eL21 family.

This chain is Large ribosomal subunit protein eL21, found in Haloquadratum walsbyi (strain DSM 16790 / HBSQ001).